The chain runs to 344 residues: Fructose-1,6-bisphosphatase class 1 (344 aa).

4 residues coordinate Mg(2+): glutamate 91, aspartate 110, leucine 112, and aspartate 113. Residues 113-116 (DGSS) and asparagine 200 contribute to the substrate site. A Mg(2+)-binding site is contributed by glutamate 272.

This sequence belongs to the FBPase class 1 family. As to quaternary structure, homotetramer. Mg(2+) serves as cofactor.

Its subcellular location is the cytoplasm. The enzyme catalyses beta-D-fructose 1,6-bisphosphate + H2O = beta-D-fructose 6-phosphate + phosphate. Its pathway is carbohydrate biosynthesis; Calvin cycle. The sequence is that of Fructose-1,6-bisphosphatase class 1 from Rhodopseudomonas palustris (strain BisB18).